A 274-amino-acid chain; its full sequence is MRSYGKEKKLVFPYVFIACCFFLAIFGFCFFNLFSQGISFSEIPTTRRSVNDETDSLDHGSSVSNIPFHGLSWNPRVFYLPNFATKQQCEAVIDMAKPKLKPSTLALRKGETAETTQNYRSLHQHTDEDESGVLAAIEEKIALATRFPKDYYESFNILRYQLGQKYDSHYDAFHSAEYGPLISQRVVTFLLFLSSVEEGGETMFPFENGRNMNGRYDYEKCVGLKVKPRQGDAIFFYNLFPNGTIDQTSLHGSCPVIKGEKWVATKWIRDQTYD.

Over 1–10 the chain is Cytoplasmic; the sequence is MRSYGKEKKL. The helical; Signal-anchor for type II membrane protein transmembrane segment at 11–31 threads the bilayer; that stretch reads VFPYVFIACCFFLAIFGFCFF. Residues 32 to 274 are Lumenal-facing; that stretch reads NLFSQGISFS…TKWIRDQTYD (243 aa). Residues 151 to 270 form the Fe2OG dioxygenase domain; it reads YYESFNILRY…KWVATKWIRD (120 aa). Positions 169 and 171 each coordinate Fe cation. Asn242 carries an N-linked (GlcNAc...) asparagine glycan. Residue His251 coordinates Fe cation. Residue Lys261 participates in 2-oxoglutarate binding.

It belongs to the P4HA family. Fe(2+) is required as a cofactor. Requires L-ascorbate as cofactor. Expressed in epidermal root hair cells (trichoblasts) root hairless cells (atrichoblasts).

It is found in the endoplasmic reticulum membrane. It carries out the reaction L-prolyl-[collagen] + 2-oxoglutarate + O2 = trans-4-hydroxy-L-prolyl-[collagen] + succinate + CO2. Catalyzes the post-translational formation of 4-hydroxyproline in -Xaa-Pro-Gly- sequences in proline-rich peptide sequences of plant glycoproteins and other proteins. Hydroxyprolines are important constituent of many plant cell wall glycoproteins such as extensins, hydroxyproline-rich glycoproteins, lectins and arabinogalactan proteins. Possesses high affinity for leucine-rich repeat and proline-rich extensins of root cell walls that are essential for root hair development. Hydroxyprolines define the subsequent O-glycosylation sites by arabinosyltransferases which elongate the O-arabinosides on extensins. The polypeptide is Prolyl 4-hydroxylase 13 (Arabidopsis thaliana (Mouse-ear cress)).